Reading from the N-terminus, the 101-residue chain is Enhancer of yellow 2 transcription factor (101 aa).

Belongs to the ENY2 family. Component of the nuclear pore complex (NPC)-associated AMEX complex (anchoring and mRNA export complex), composed of at least e(y)2 and xmas-2. Component of the SAGA transcription coactivator-HAT complexes, at least composed of Ada2b, e(y)2, Pcaf/Gcn5, Taf10 and Nipped-A/Trrap. Within the SAGA complex, e(y)2, Sgf11, and not/nonstop form an additional subcomplex of SAGA called the DUB module (deubiquitination module). Component of the THO complex, composed of at least e(y)2, HPR1, THO2, THOC5, THOC6 and THOC7. Interacts with e(y)1. Interacts with su(Hw) (via zinc fingers). Interacts with xmas-2; required for localization to the nuclear periphery. Interacts with the nuclear pore complex (NPC).

The protein localises to the nucleus. Its subcellular location is the nucleoplasm. It localises to the cytoplasm. In terms of biological role, involved in mRNA export coupled transcription activation by association with both the AMEX and the SAGA complexes. The SAGA complex is a multiprotein complex that activates transcription by remodeling chromatin and mediating histone acetylation and deubiquitination. Within the SAGA complex, participates in a subcomplex that specifically deubiquitinates histone H2B. The SAGA complex is recruited to specific gene promoters by activators, where it is required for transcription. Required for nuclear receptor-mediated transactivation. Involved in transcription elongation by recruiting the THO complex onto nascent mRNA. The AMEX complex functions in docking export-competent ribonucleoprotein particles (mRNPs) to the nuclear entrance of the nuclear pore complex (nuclear basket). AMEX participates in mRNA export and accurate chromatin positioning in the nucleus by tethering genes to the nuclear periphery. This Drosophila sechellia (Fruit fly) protein is Enhancer of yellow 2 transcription factor.